A 129-amino-acid polypeptide reads, in one-letter code: Large ribosomal subunit protein bL12 (129 aa).

Positions 95–123 are enriched in basic and acidic residues; it reads MVESTPKSIKEGVSKEDAEEAKKSLEDAG. The disordered stretch occupies residues 95 to 129; it reads MVESTPKSIKEGVSKEDAEEAKKSLEDAGGKASLK.

It belongs to the bacterial ribosomal protein bL12 family. In terms of assembly, homodimer. Part of the ribosomal stalk of the 50S ribosomal subunit. Forms a multimeric L10(L12)X complex, where L10 forms an elongated spine to which 2 to 4 L12 dimers bind in a sequential fashion. Binds GTP-bound translation factors.

In terms of biological role, forms part of the ribosomal stalk which helps the ribosome interact with GTP-bound translation factors. Is thus essential for accurate translation. The sequence is that of Large ribosomal subunit protein bL12 from Acaryochloris marina (strain MBIC 11017).